Consider the following 458-residue polypeptide: Bifunctional protein GlmU (458 aa).

Residues 1-232 (MTSSLSVIIL…TFEIEGVNNR (232 aa)) are pyrophosphorylase. UDP-N-acetyl-alpha-D-glucosamine is bound by residues 10 to 13 (LAAG), lysine 24, glutamine 79, 84 to 85 (GT), 106 to 108 (YGD), glycine 142, glutamate 157, asparagine 172, and asparagine 230. Residue aspartate 108 coordinates Mg(2+). Position 230 (asparagine 230) interacts with Mg(2+). Positions 233–253 (QQLASLERTWQGKLVADLQEA) are linker. The interval 254 to 458 (GVQFADPTRV…KNDFKRPTKK (205 aa)) is N-acetyltransferase. Residues arginine 336 and lysine 354 each contribute to the UDP-N-acetyl-alpha-D-glucosamine site. The Proton acceptor role is filled by histidine 366. UDP-N-acetyl-alpha-D-glucosamine contacts are provided by tyrosine 369 and asparagine 380. Acetyl-CoA contacts are provided by residues alanine 383, 389–390 (NY), serine 408, alanine 426, and arginine 443.

In the N-terminal section; belongs to the N-acetylglucosamine-1-phosphate uridyltransferase family. It in the C-terminal section; belongs to the transferase hexapeptide repeat family. As to quaternary structure, homotrimer. Requires Mg(2+) as cofactor.

It is found in the cytoplasm. It catalyses the reaction alpha-D-glucosamine 1-phosphate + acetyl-CoA = N-acetyl-alpha-D-glucosamine 1-phosphate + CoA + H(+). The enzyme catalyses N-acetyl-alpha-D-glucosamine 1-phosphate + UTP + H(+) = UDP-N-acetyl-alpha-D-glucosamine + diphosphate. The protein operates within nucleotide-sugar biosynthesis; UDP-N-acetyl-alpha-D-glucosamine biosynthesis; N-acetyl-alpha-D-glucosamine 1-phosphate from alpha-D-glucosamine 6-phosphate (route II): step 2/2. It functions in the pathway nucleotide-sugar biosynthesis; UDP-N-acetyl-alpha-D-glucosamine biosynthesis; UDP-N-acetyl-alpha-D-glucosamine from N-acetyl-alpha-D-glucosamine 1-phosphate: step 1/1. It participates in bacterial outer membrane biogenesis; LPS lipid A biosynthesis. Functionally, catalyzes the last two sequential reactions in the de novo biosynthetic pathway for UDP-N-acetylglucosamine (UDP-GlcNAc). The C-terminal domain catalyzes the transfer of acetyl group from acetyl coenzyme A to glucosamine-1-phosphate (GlcN-1-P) to produce N-acetylglucosamine-1-phosphate (GlcNAc-1-P), which is converted into UDP-GlcNAc by the transfer of uridine 5-monophosphate (from uridine 5-triphosphate), a reaction catalyzed by the N-terminal domain. In Psychrobacter cryohalolentis (strain ATCC BAA-1226 / DSM 17306 / VKM B-2378 / K5), this protein is Bifunctional protein GlmU.